The primary structure comprises 449 residues: Ribosomal protein uS12 methylthiotransferase RimO (449 aa).

The MTTase N-terminal domain maps to 16 to 126 (PKISFVSLGC…VMEAVHAAIA (111 aa)). Positions 25, 61, 90, 157, 161, and 164 each coordinate [4Fe-4S] cluster. Residues 143 to 381 (LTPRHYAYLK…MEHQQKISAR (239 aa)) enclose the Radical SAM core domain. The TRAM domain occupies 384 to 449 (REKIGKHVSV…DAYDLHGKAV (66 aa)).

Belongs to the methylthiotransferase family. RimO subfamily. [4Fe-4S] cluster serves as cofactor.

The protein localises to the cytoplasm. The catalysed reaction is L-aspartate(89)-[ribosomal protein uS12]-hydrogen + (sulfur carrier)-SH + AH2 + 2 S-adenosyl-L-methionine = 3-methylsulfanyl-L-aspartate(89)-[ribosomal protein uS12]-hydrogen + (sulfur carrier)-H + 5'-deoxyadenosine + L-methionine + A + S-adenosyl-L-homocysteine + 2 H(+). Its function is as follows. Catalyzes the methylthiolation of an aspartic acid residue of ribosomal protein uS12. The chain is Ribosomal protein uS12 methylthiotransferase RimO from Beijerinckia indica subsp. indica (strain ATCC 9039 / DSM 1715 / NCIMB 8712).